Here is a 190-residue protein sequence, read N- to C-terminus: MAAIKPITTYKGKIVPLFNDNIDTDQIIPKVHLKRISKSGFGPFAFDEWRYLPDGSDNPDFNPNKPQYKGASILITGDNFGCGSSREHAAWALKDYGFHIIIAGSFSDIFYMNCTKNAMLPIVLEKNAREHLAKYVEIEVDLPNQTVSSPDKSFHFEIDETWKNKLVNGLDDIAITLQYESLIEKYEKSL.

The protein belongs to the LeuD family. LeuD type 1 subfamily. Heterodimer of LeuC and LeuD.

It catalyses the reaction (2R,3S)-3-isopropylmalate = (2S)-2-isopropylmalate. Its pathway is amino-acid biosynthesis; L-leucine biosynthesis; L-leucine from 3-methyl-2-oxobutanoate: step 2/4. In terms of biological role, catalyzes the isomerization between 2-isopropylmalate and 3-isopropylmalate, via the formation of 2-isopropylmaleate. The polypeptide is 3-isopropylmalate dehydratase small subunit (Staphylococcus aureus (strain MRSA252)).